The following is a 700-amino-acid chain: MARKTPIERYRNIGISAHIDAGKTTTTERILFYTGVNHKIGEVHDGAATMDWMEQEQERGITITSAATTAFWKGMGNNYPEHRINIIDTPGHVDFTIEVERSMRVLDGACMVYCAVGGVQPQSETVWRQANKYKVPRLAFVNKMDRTGANFFKVYDQLKLRLKANPVPVVVPIGAEENFKGVVDLLKMKAIIWDEASQGTKFDYVDIPAELADTCQEWREKMVEAAAEASEDLMNKYLEEGDLPEADIVKALRDRTIACEIQPMLCGTAFKNKGVQRMLDAVIDFLPSPVDIPPVKGELESGEAAERQASDEEKFSSLAFKIMTDPFVGQLIFFRVYSGVVNSGDTLLNSTKGKKERLGRILQMHANQREEIKEVRAGDIAAAVGLKEATTGDTLCDPAHPIVLERMVFPEPVISQAVEPKTKADQEKMGLALNRLAQEDPSFRVQTDEESGQTIISGMGELHLEILVDRMKREFGVEATVGKPQVAYRETIRSTAKDVDGKFVKQSGGRGQYGHAVITLEPNEQGKGYEFFDEIKGGVIPREYIPAVDKGIQDTLKSGVLAGFPVVDVKVHLTFGSYHDVDSNENAFRMAGSMAFKEAMRRANPVVLEPMMAVEVETPEDYMGNVMGDLSGRRGIVQGMEDMVGGGKIVRAEVPLSEMFGYSTSLRSLTQGRATYTMEFKHYAEAPKNVADAIISAKSK.

Positions 8 to 290 (ERYRNIGISA…AVIDFLPSPV (283 aa)) constitute a tr-type G domain. GTP-binding positions include 17-24 (AHIDAGKT), 88-92 (DTPGH), and 142-145 (NKMD).

It belongs to the TRAFAC class translation factor GTPase superfamily. Classic translation factor GTPase family. EF-G/EF-2 subfamily.

It is found in the cytoplasm. Functionally, catalyzes the GTP-dependent ribosomal translocation step during translation elongation. During this step, the ribosome changes from the pre-translocational (PRE) to the post-translocational (POST) state as the newly formed A-site-bound peptidyl-tRNA and P-site-bound deacylated tRNA move to the P and E sites, respectively. Catalyzes the coordinated movement of the two tRNA molecules, the mRNA and conformational changes in the ribosome. The chain is Elongation factor G 2 from Burkholderia mallei (strain ATCC 23344).